The primary structure comprises 468 residues: Ribosomal protein uS12 methylthiotransferase RimO (468 aa).

Residues 18–129 (PTVAFAHLGC…IVEVLERVEA (112 aa)) enclose the MTTase N-terminal domain. 6 residues coordinate [4Fe-4S] cluster: cysteine 27, cysteine 63, cysteine 92, cysteine 167, cysteine 171, and cysteine 174. The Radical SAM core domain maps to 153-382 (TTGEAVAYLK…MTLQQPISAA (230 aa)). Residues 385–456 (ARWVGRTVDA…IYDLRAEIVG (72 aa)) form the TRAM domain.

Belongs to the methylthiotransferase family. RimO subfamily. [4Fe-4S] cluster serves as cofactor.

The protein localises to the cytoplasm. It catalyses the reaction L-aspartate(89)-[ribosomal protein uS12]-hydrogen + (sulfur carrier)-SH + AH2 + 2 S-adenosyl-L-methionine = 3-methylsulfanyl-L-aspartate(89)-[ribosomal protein uS12]-hydrogen + (sulfur carrier)-H + 5'-deoxyadenosine + L-methionine + A + S-adenosyl-L-homocysteine + 2 H(+). In terms of biological role, catalyzes the methylthiolation of an aspartic acid residue of ribosomal protein uS12. The chain is Ribosomal protein uS12 methylthiotransferase RimO from Synechococcus sp. (strain WH7803).